The primary structure comprises 103 residues: Histone H4 (103 aa).

An N6-acetyl-N6-methyllysine; alternate modification is found at K6. K6, K9, and K13 each carry N6-methyllysine; alternate. Position 13 is an N6-acetyl-N6-methyllysine; alternate (K13). The DNA-binding element occupies 17–21 (KRHRK). Residue K92 is modified to N6-glutaryllysine.

Belongs to the histone H4 family. The nucleosome is a histone octamer containing two molecules each of H2A, H2B, H3 and H4 assembled in one H3-H4 heterotetramer and two H2A-H2B heterodimers. The octamer wraps approximately 147 bp of DNA. In terms of processing, glutarylation at Lys-92 (H4K91glu) destabilizes nucleosomes by promoting dissociation of the H2A-H2B dimers from nucleosomes.

Its subcellular location is the nucleus. The protein localises to the chromosome. Core component of nucleosome. Nucleosomes wrap and compact DNA into chromatin, limiting DNA accessibility to the cellular machineries which require DNA as a template. Histones thereby play a central role in transcription regulation, DNA repair, DNA replication and chromosomal stability. DNA accessibility is regulated via a complex set of post-translational modifications of histones, also called histone code, and nucleosome remodeling. The sequence is that of Histone H4 (ahsb4) from Blastobotrys adeninivorans (Yeast).